Here is a 348-residue protein sequence, read N- to C-terminus: N-formyl peptide receptor 2 (348 aa).

Residue Asn1 is glycosylated (N-linked (GlcNAc...) asparagine). The Extracellular portion of the chain corresponds to 1-24 (NFSTPLNEYEEGSYESAGYTVLRI). Residues 25 to 47 (LPLVVLGVTFVLGVLGNGLVIWV) form a helical membrane-spanning segment. Topologically, residues 48–58 (AGFRMTRTVTT) are cytoplasmic. The helical transmembrane segment at 59 to 80 (ICYLNLALADFSFTATLPFLIV) threads the bilayer. Residues 81 to 97 (SMAMGEKWPFGWFLCKL) are Extracellular-facing. Cys95 and Cys173 are oxidised to a cystine. The chain crosses the membrane as a helical span at residues 98 to 118 (IHIVVDINLFGSVFLIGFIAL). Residues 119–137 (DRCICVLHPVWAQNHRTVS) lie on the Cytoplasmic side of the membrane. The chain crosses the membrane as a helical span at residues 138–159 (LAMKVIVGPWILALVLTLPVFL). Topologically, residues 160–202 (FLTTVTIPNGDTYCTFNFASWGGTPEERLKVAITLLTARGIIR) are extracellular. A helical transmembrane segment spans residues 203 to 223 (FVIGFSLPMSIVAICYGLIAA). The Cytoplasmic segment spans residues 224–239 (KIHKKGMIKSSRPLRV). Residues 240–263 (LTAVVASFFICWFPFQLVALLGTV) form a helical membrane-spanning segment. The Extracellular portion of the chain corresponds to 264 to 283 (WLKEMLFYGKYKIIDILVNP). A helical membrane pass occupies residues 284–303 (TSSLAFFNCCLNPMLYVFVG). Residues 304-348 (QDFRERLIHSLPTSLERALSEDSAPTNDTAANCASPPAETELQAM) are Cytoplasmic-facing. Residues 322-348 (LSEDSAPTNDTAANCASPPAETELQAM) are disordered. Positions 326–335 (SAPTNDTAAN) are enriched in polar residues.

Belongs to the G-protein coupled receptor 1 family. In terms of assembly, interacts with Amyloid-beta protein 42, product of APP; the interaction takes place at the cell surface and the complex is then rapidly internalized.

It is found in the cell membrane. Its function is as follows. Low affinity receptor for N-formyl-methionyl peptides, which are powerful neutrophil chemotactic factors. Binding of FMLP to the receptor causes activation of neutrophils. This response is mediated via a G-protein that activates a phosphatidylinositol-calcium second messenger system. Receptor for the chemokine-like protein FAM19A5, mediating FAM19A5-stimulated macrophage chemotaxis and the inhibitory effect on TNFSF11/RANKL-induced osteoclast differentiation. This Pan troglodytes (Chimpanzee) protein is N-formyl peptide receptor 2 (FPR2).